The sequence spans 431 residues: Argininosuccinate lyase (431 aa).

The protein belongs to the lyase 1 family. Argininosuccinate lyase subfamily.

It localises to the cytoplasm. It catalyses the reaction 2-(N(omega)-L-arginino)succinate = fumarate + L-arginine. It functions in the pathway amino-acid biosynthesis; L-arginine biosynthesis; L-arginine from L-ornithine and carbamoyl phosphate: step 3/3. The sequence is that of Argininosuccinate lyase from Xanthomonas campestris pv. campestris (strain B100).